The sequence spans 154 residues: Nuclear cap-binding protein subunit 2 (154 aa).

Residues Tyr-10, Tyr-33, 102-106 (RVDWD), 113-117 (RQYGR), and 123-124 (QV) contribute to the mRNA site. Positions 30-108 (CTLYVGNLSF…RLIRVDWDAG (79 aa)) constitute an RRM domain.

This sequence belongs to the RRM NCBP2 family. Component of the nuclear cap-binding complex (CBC), a heterodimer composed of Cbp80 and Cbp20 that interacts with m7GpppG-capped RNA. Interacts with Ars2.

It is found in the nucleus. Component of the cap-binding complex (CBC), which binds co-transcriptionally to the 5' cap of pre-mRNAs and is involved in various processes such as pre-mRNA splicing and RNA-mediated gene silencing (RNAi). The CBC complex is involved in miRNA-mediated RNA interference via its interaction with Ars2 and is required for primary microRNAs (miRNAs) processing. Also involved in innate immunity via the short interfering RNAs (siRNAs) processing machinery by restricting the viral RNA production. In the CBC complex, Cbp20 recognizes and binds capped RNAs (m7GpppG-capped RNA) but requires Cbp80 to stabilize the movement of its N-terminal loop and lock the CBC into a high affinity cap-binding state with the cap structure. The chain is Nuclear cap-binding protein subunit 2 (Cbp20) from Drosophila yakuba (Fruit fly).